We begin with the raw amino-acid sequence, 333 residues long: GDP-fucose transporter 1 (333 aa).

The next 8 membrane-spanning stretches (helical) occupy residues 13-33 (SIKIAFVVALYWVVSISMVFL), 45-65 (APMFVTWFQCVVAVVTCFILG), 95-115 (LVFVGMIAFNNLALKFVGVAF), 139-159 (TSMPALLMCGVIVAGFFVGVN), 169-189 (MAGIMYGVLASLCVALNAIYI), 211-231 (AIFLFLPVITFMGEIPDIAAS), 239-259 (YWFLMTVAGLLGIAIGLVSML), and 293-313 (TATWWLGNVFVLGGSLGYVLV).

The protein belongs to the TPT transporter family. SLC35C subfamily.

The protein resides in the golgi apparatus membrane. The enzyme catalyses GMP(out) + GDP-beta-L-fucose(in) = GMP(in) + GDP-beta-L-fucose(out). Its function is as follows. Antiporter specific for GDP-l-fucose and depending on the concomitant reverse transport of GMP. Involved in GDP-fucose import from the cytoplasm into the Golgi lumen. This chain is GDP-fucose transporter 1 (slc35c1), found in Monosiga brevicollis (Choanoflagellate).